A 720-amino-acid polypeptide reads, in one-letter code: Glycine--tRNA ligase beta subunit (720 aa).

This sequence belongs to the class-II aminoacyl-tRNA synthetase family. Tetramer of two alpha and two beta subunits.

It is found in the cytoplasm. The catalysed reaction is tRNA(Gly) + glycine + ATP = glycyl-tRNA(Gly) + AMP + diphosphate. This chain is Glycine--tRNA ligase beta subunit, found in Acidovorax ebreus (strain TPSY) (Diaphorobacter sp. (strain TPSY)).